The chain runs to 296 residues: Polyamine aminopropyltransferase (296 aa).

Residues 16 to 251 (HLWYFEYYTG…GMWSYTFASK (236 aa)) enclose the PABS domain. An S-methyl-5'-thioadenosine-binding site is contributed by Q46. 2 residues coordinate spermidine: H77 and D101. S-methyl-5'-thioadenosine contacts are provided by residues E121 and 152–153 (NG). Residue D170 is the Proton acceptor of the active site. A spermidine-binding site is contributed by 170-173 (DSTD).

It belongs to the spermidine/spermine synthase family. Homodimer or homotetramer.

It is found in the cytoplasm. The enzyme catalyses S-adenosyl 3-(methylsulfanyl)propylamine + putrescine = S-methyl-5'-thioadenosine + spermidine + H(+). The protein operates within amine and polyamine biosynthesis; spermidine biosynthesis; spermidine from putrescine: step 1/1. Functionally, catalyzes the irreversible transfer of a propylamine group from the amino donor S-adenosylmethioninamine (decarboxy-AdoMet) to putrescine (1,4-diaminobutane) to yield spermidine. The chain is Polyamine aminopropyltransferase from Thermotoga neapolitana (strain ATCC 49049 / DSM 4359 / NBRC 107923 / NS-E).